The sequence spans 184 residues: Small ribosomal subunit protein bS16 (184 aa).

Residues 150–160 show a composition bias toward basic and acidic residues; it reads KKAAEAAEKAA. Positions 150 to 184 are disordered; the sequence is KKAAEAAEKAAAEAPAEEATEAPAEEAAATEAAAE. Over residues 164-173 the composition is skewed to acidic residues; sequence PAEEATEAPA. The segment covering 174–184 has biased composition (low complexity); the sequence is EEAAATEAAAE.

This sequence belongs to the bacterial ribosomal protein bS16 family.

The chain is Small ribosomal subunit protein bS16 from Bacteroides thetaiotaomicron (strain ATCC 29148 / DSM 2079 / JCM 5827 / CCUG 10774 / NCTC 10582 / VPI-5482 / E50).